A 147-amino-acid chain; its full sequence is UPF0306 protein YhbP (147 aa).

The protein belongs to the UPF0306 family.

The protein is UPF0306 protein YhbP of Salmonella paratyphi A (strain AKU_12601).